The chain runs to 808 residues: Dynamin-related protein 3A (808 aa).

The disordered stretch occupies residues 1–31 (MTIEEVSGETPPSTPPSSSTPSPSSSTTNAA). Over residues 16–28 (PSSSTPSPSSSTT) the composition is skewed to low complexity. The region spanning 56–330 (TIALPQVVVV…LVQHIKVLLP (275 aa)) is the Dynamin-type G domain. Positions 66–73 (GSQSSGKS) are G1 motif. 66-73 (GSQSSGKS) provides a ligand contact to GTP. The segment at 92–94 (CTR) is G2 motif. The interval 172-175 (DLPG) is G3 motif. GTP contacts are provided by residues 172 to 176 (DLPGI) and 241 to 244 (TKLD). The segment at 241-244 (TKLD) is G4 motif. A G5 motif region spans residues 271–274 (VNRC). Residues 548 to 578 (IPHPVARPKDTVEPDRTSSSTSQVKSRSFLG) are disordered. Positions 554 to 563 (RPKDTVEPDR) are enriched in basic and acidic residues. The segment covering 564–575 (TSSSTSQVKSRS) has biased composition (low complexity). The 92-residue stretch at 670–761 (IQITKLLLRS…TLDELPLEAD (92 aa)) folds into the GED domain. The tract at residues 774–808 (LTSSKYSTSSSYSASPSTTRRSRRAGDQHQNGYGF) is disordered. A compositionally biased stretch (low complexity) spans 775 to 792 (TSSKYSTSSSYSASPSTT).

Belongs to the TRAFAC class dynamin-like GTPase superfamily. Dynamin/Fzo/YdjA family. In terms of assembly, homooligomer. Interacts with ARC5 on peroxisomes and ELM1 on mitochondria. In terms of tissue distribution, ubiquitous. Preferentially expressed in flowers.

The protein localises to the mitochondrion. The protein resides in the peroxisome. Involved in the control of mitochondrial and peroxisomal division and morphology. In association with PEX11C, PEX11D, PEX11E and FIS1B, is involved in cell cycle-associated constitutive self-replication of preexisting peroxisomes. This Arabidopsis thaliana (Mouse-ear cress) protein is Dynamin-related protein 3A (DRP3A).